The chain runs to 235 residues: 2-C-methyl-D-erythritol 4-phosphate cytidylyltransferase (235 aa).

Belongs to the IspD/TarI cytidylyltransferase family. IspD subfamily. In terms of assembly, homodimer.

The catalysed reaction is 2-C-methyl-D-erythritol 4-phosphate + CTP + H(+) = 4-CDP-2-C-methyl-D-erythritol + diphosphate. Its pathway is isoprenoid biosynthesis; isopentenyl diphosphate biosynthesis via DXP pathway; isopentenyl diphosphate from 1-deoxy-D-xylulose 5-phosphate: step 2/6. Catalyzes the formation of 4-diphosphocytidyl-2-C-methyl-D-erythritol from CTP and 2-C-methyl-D-erythritol 4-phosphate (MEP). The chain is 2-C-methyl-D-erythritol 4-phosphate cytidylyltransferase from Blochmanniella pennsylvanica (strain BPEN).